The following is a 351-amino-acid chain: Histidinol-phosphate aminotransferase 1 (351 aa).

Lys-210 carries the post-translational modification N6-(pyridoxal phosphate)lysine.

The protein belongs to the class-II pyridoxal-phosphate-dependent aminotransferase family. Histidinol-phosphate aminotransferase subfamily. As to quaternary structure, homodimer. Pyridoxal 5'-phosphate serves as cofactor.

It carries out the reaction L-histidinol phosphate + 2-oxoglutarate = 3-(imidazol-4-yl)-2-oxopropyl phosphate + L-glutamate. It participates in amino-acid biosynthesis; L-histidine biosynthesis; L-histidine from 5-phospho-alpha-D-ribose 1-diphosphate: step 7/9. In Pasteurella multocida (strain Pm70), this protein is Histidinol-phosphate aminotransferase 1 (hisC1).